The primary structure comprises 165 residues: Ribosome maturation factor RimM (165 aa).

A PRC barrel domain is found at 94 to 165; that stretch reads EDEFYIADLT…YVILNYQREA (72 aa).

It belongs to the RimM family. In terms of assembly, binds ribosomal protein uS19.

The protein localises to the cytoplasm. In terms of biological role, an accessory protein needed during the final step in the assembly of 30S ribosomal subunit, possibly for assembly of the head region. Essential for efficient processing of 16S rRNA. May be needed both before and after RbfA during the maturation of 16S rRNA. It has affinity for free ribosomal 30S subunits but not for 70S ribosomes. This chain is Ribosome maturation factor RimM, found in Rickettsia rickettsii (strain Iowa).